The chain runs to 438 residues: GTPase Obg (438 aa).

Positions 2 to 160 (NMFVDQIKIE…HYLELELKML (159 aa)) constitute an Obg domain. The region spanning 161–337 (ADVGLIGFPS…LMQLTADLLD (177 aa)) is the OBG-type G domain. GTP is bound by residues 167–174 (GFPSVGKS), 192–196 (FTTLT), 214–217 (DMPG), 284–287 (TKMD), and 318–320 (SAV). Residues Ser174 and Thr194 each coordinate Mg(2+). The region spanning 360–438 (PDKKDEADFT…IEKFVFEFIQ (79 aa)) is the OCT domain.

Belongs to the TRAFAC class OBG-HflX-like GTPase superfamily. OBG GTPase family. In terms of assembly, monomer. The cofactor is Mg(2+).

It localises to the cytoplasm. In terms of biological role, an essential GTPase which binds GTP, GDP and possibly (p)ppGpp with moderate affinity, with high nucleotide exchange rates and a fairly low GTP hydrolysis rate. Plays a role in control of the cell cycle, stress response, ribosome biogenesis and in those bacteria that undergo differentiation, in morphogenesis control. This is GTPase Obg from Limosilactobacillus reuteri (strain DSM 20016) (Lactobacillus reuteri).